We begin with the raw amino-acid sequence, 347 residues long: Protein RecA (347 aa).

65 to 72 (GPESSGKT) lines the ATP pocket. Residues 327-336 (KFEPTELSRE) are compositionally biased toward basic and acidic residues. The interval 327 to 347 (KFEPTELSREEGDEDTLEDAM) is disordered. Acidic residues predominate over residues 337 to 347 (EGDEDTLEDAM).

The protein belongs to the RecA family.

Its subcellular location is the cytoplasm. Its function is as follows. Can catalyze the hydrolysis of ATP in the presence of single-stranded DNA, the ATP-dependent uptake of single-stranded DNA by duplex DNA, and the ATP-dependent hybridization of homologous single-stranded DNAs. It interacts with LexA causing its activation and leading to its autocatalytic cleavage. This Xylella fastidiosa (strain M23) protein is Protein RecA.